An 83-amino-acid chain; its full sequence is Acyl carrier protein MmaB (83 aa).

Residues 3–83 (DPVRQRILLA…LSQSELESPT (81 aa)) form the Carrier domain. Serine 39 is modified (O-(pantetheine 4'-phosphoryl)serine).

This sequence belongs to the acyl carrier protein (ACP) family. Requires pantetheine 4'-phosphate as cofactor.

Its pathway is lipid metabolism; fatty acid metabolism. Its function is as follows. Acyl-carrier protein (ACP) involved in the biosynthesis of a unique class of isonitrile lipopeptides (INLPs) that seem to play a role in metal acquisition in M.marinum. Is the dedicated ACP for the loading of activated acyl groups catalyzed by MmaC. The sequence is that of Acyl carrier protein MmaB from Mycobacterium marinum (strain ATCC BAA-535 / M).